The following is a 215-amino-acid chain: N-(5'-phosphoribosyl)anthranilate isomerase (215 aa).

It belongs to the TrpF family.

It carries out the reaction N-(5-phospho-beta-D-ribosyl)anthranilate = 1-(2-carboxyphenylamino)-1-deoxy-D-ribulose 5-phosphate. The protein operates within amino-acid biosynthesis; L-tryptophan biosynthesis; L-tryptophan from chorismate: step 3/5. In Sinorhizobium medicae (strain WSM419) (Ensifer medicae), this protein is N-(5'-phosphoribosyl)anthranilate isomerase.